The chain runs to 327 residues: Beta-1,4-galactosyltransferase 7 (327 aa).

Topologically, residues 1–30 (MFPSRRKAAQLPWEDGRSGLLSGGLPRKCS) are cytoplasmic. Residues 31–51 (VFHLFVACLSLGFFSLLWLQL) form a helical; Signal-anchor for type II membrane protein membrane-spanning segment. Residues 52–327 (SCSGDVARAV…KTATPWCTFS (276 aa)) lie on the Lumenal side of the membrane. Residues 63–87 (GQGQETSGPPRACPPEPPPEHWEED) form a disordered region. UDP-alpha-D-galactose-binding positions include 100 to 104 (PFRER) and 139 to 141 (FNR). Residue Asn-154 is glycosylated (N-linked (GlcNAc...) asparagine). Residues 164–165 (VD), Tyr-194, and Trp-224 contribute to the UDP-alpha-D-galactose site. Asp-165 lines the Mn(2+) pocket. An N-acetyl-D-glucosamine-binding site is contributed by 226–229 (REDD). Mn(2+) is bound at residue His-257. UDP-alpha-D-galactose is bound by residues 257 to 259 (HLH) and Arg-266. Residues Cys-316 and Cys-324 are joined by a disulfide bond.

This sequence belongs to the glycosyltransferase 7 family. It depends on Mn(2+) as a cofactor. High expression in heart, pancreas and liver, medium in placenta and kidney, low in brain, skeletal muscle and lung.

It localises to the golgi apparatus. It is found in the golgi stack membrane. The enzyme catalyses 3-O-(beta-D-xylosyl)-L-seryl-[protein] + UDP-alpha-D-galactose = 3-O-(beta-D-galactosyl-(1-&gt;4)-beta-D-xylosyl)-L-seryl-[protein] + UDP + H(+). The protein operates within protein modification; protein glycosylation. In terms of biological role, required for the biosynthesis of the tetrasaccharide linkage region of proteoglycans, especially for small proteoglycans in skin fibroblasts. The sequence is that of Beta-1,4-galactosyltransferase 7 (B4GALT7) from Homo sapiens (Human).